The following is a 139-amino-acid chain: Holo-[acyl-carrier-protein] synthase (139 aa).

Residues D8 and E57 each contribute to the Mg(2+) site.

This sequence belongs to the P-Pant transferase superfamily. AcpS family. Mg(2+) is required as a cofactor.

The protein localises to the cytoplasm. The catalysed reaction is apo-[ACP] + CoA = holo-[ACP] + adenosine 3',5'-bisphosphate + H(+). In terms of biological role, transfers the 4'-phosphopantetheine moiety from coenzyme A to a Ser of acyl-carrier-protein. This is Holo-[acyl-carrier-protein] synthase from Sinorhizobium medicae (strain WSM419) (Ensifer medicae).